Here is a 37-residue protein sequence, read N- to C-terminus: Large ribosomal subunit protein bL36c (37 aa).

It belongs to the bacterial ribosomal protein bL36 family.

The protein resides in the plastid. Its subcellular location is the chloroplast. This is Large ribosomal subunit protein bL36c from Populus alba (White poplar).